The following is a 1791-amino-acid chain: Sodium channel protein type 11 subunit alpha (1791 aa).

The Cytoplasmic portion of the chain corresponds to 1–126; the sequence is MDDRCYPVIF…SIRSLAIRVS (126 aa). The stretch at 115–408 is one I repeat; that stretch reads FNSIRSLAIR…VTMAYEEQNK (294 aa). A helical membrane pass occupies residues 127-148; sequence VHSLFSMFIIGTVIINCVFMAT. The Extracellular segment spans residues 149 to 156; the sequence is GPAKNSNS. Residues 157–180 traverse the membrane as a helical segment; the sequence is NNTDIAECVFTGIYIFEALIKILA. The Cytoplasmic portion of the chain corresponds to 181-192; sequence RGFILDEFSFLR. A helical membrane pass occupies residues 193–212; that stretch reads DPWNWLDSIVIGIAIVSYIP. Residues 213 to 219 are Extracellular-facing; it reads GITIKLL. The chain crosses the membrane as a helical; Voltage-sensor span at residues 220 to 239; that stretch reads PLRTFRVFRALKAISVVSRL. Over 240 to 255 the chain is Cytoplasmic; the sequence is KVIVGALLRSVKKLVN. The helical transmembrane segment at 256-269 threads the bilayer; the sequence is VIILTFFCLSIFAL. Residues 270–344 are Extracellular-facing; the sequence is VGQQLFMGSL…PDYNYTNFDN (75 aa). A disulfide bridge links cysteine 283 with cysteine 322. Asparagine 290 and asparagine 338 each carry an N-linked (GlcNAc...) asparagine glycan. An intramembrane region (pore-forming) is located at residues 345 to 369; the sequence is FGWSFLAMFRLMTQDSWEKLYQQTL. The Extracellular portion of the chain corresponds to 370 to 376; the sequence is RTTGLYS. The chain crosses the membrane as a helical span at residues 377–402; the sequence is VFFFIVVIFLGSFYLINLTLAVVTMA. The Cytoplasmic portion of the chain corresponds to 403–572; the sequence is YEEQNKNVAA…WLCVKKVLRT (170 aa). An II repeat occupies 559–833; sequence CCPQWLCVKK…EGEARKTKVQ (275 aa). The chain crosses the membrane as a helical span at residues 573 to 596; the sequence is VMTDPFTELAITICIIINTVFLAM. Residues 597 to 607 are Extracellular-facing; the sequence is EHHKMEASFEK. Residues 608-631 traverse the membrane as a helical segment; that stretch reads MLNIGNLVFTSIFIAEMCLKIIAL. The Cytoplasmic segment spans residues 632-639; sequence DPYHYFRR. Residues 640–659 form a helical membrane-spanning segment; it reads GWNIFDSIVALLSFADVMNC. Over 660-667 the chain is Extracellular; the sequence is VLQKRSWP. A helical; Voltage-sensor transmembrane segment spans residues 668 to 687; it reads FLRSFRVLRVFKLAKSWPTL. Residues 688–702 are Cytoplasmic-facing; the sequence is NTLIKIIGNSVGALG. Residues 703–725 traverse the membrane as a helical segment; the sequence is SLTVVLVIVIFIFSVVGMQLFGR. The Extracellular segment spans residues 726-753; that stretch reads SFNSQKSPKLCNPTGPTVSCLRHWHMGD. The segment at residues 754–774 is an intramembrane region (pore-forming); it reads FWHSFLVVFRILCGEWIENMW. At 775–785 the chain is on the extracellular side; sequence ECMQEANASSS. Cysteine 776 and cysteine 787 form a disulfide bridge. Asparagine 781 carries N-linked (GlcNAc...) asparagine glycosylation. Residues 786-811 traverse the membrane as a helical segment; the sequence is LCVIVFILITVIGKLVVLNLFIALLL. At 812–1051 the chain is on the cytoplasmic side; that stretch reads NSFSNEERNG…WWNLRKTCYQ (240 aa). The stretch at 1044–1339 is one III repeat; sequence NLRKTCYQIV…KKYYNAMKKL (296 aa). A helical membrane pass occupies residues 1052 to 1074; the sequence is IVKHSWFESFIIFVILLSSGALI. Residues 1075-1088 are Extracellular-facing; sequence FEDVHLENQPKIQE. A helical membrane pass occupies residues 1089-1114; sequence LLNCTDIIFTHIFILEMVLKWVAFGF. Residues 1115–1120 are Cytoplasmic-facing; it reads GKYFTS. The chain crosses the membrane as a helical span at residues 1121 to 1138; the sequence is AWCCLDFIIVIVSVTTLI. Residue asparagine 1139 is a topological domain, extracellular. The helical; Voltage-sensor transmembrane segment at 1140–1161 threads the bilayer; the sequence is LMELKSFRTLRALRPLRALSQF. Over 1162–1180 the chain is Cytoplasmic; sequence EGMKVVVNALIGAIPAILN. The helical transmembrane segment at 1181–1202 threads the bilayer; the sequence is VLLVCLIFWLVFCILGVYFFSG. Topologically, residues 1203 to 1243 are extracellular; the sequence is KFGKCINGTDSVINYTIITNKSQCESGNFSWINQKVNFDNV. N-linked (GlcNAc...) asparagine glycosylation is found at asparagine 1209, asparagine 1216, asparagine 1222, and asparagine 1230. Residues 1244 to 1265 constitute an intramembrane region (pore-forming); it reads GNAYLALLQVATFKGWMDIIYA. Over 1266-1281 the chain is Extracellular; that stretch reads AVDSTEKEQQPEFESN. Residues 1282–1308 traverse the membrane as a helical segment; the sequence is SLGYIYFVVFIIFGSFFTLNLFIGVII. Residues 1309–1361 lie on the Cytoplasmic side of the membrane; it reads DNFNQQQKKLGGQDIFMTEEQKKYYNAMKKLGSKKPQKPIPRPLNKCQGLVFD. The IV repeat unit spans residues 1348-1639; that stretch reads IPRPLNKCQG…WEKFDPEATQ (292 aa). A helical transmembrane segment spans residues 1362–1385; it reads IVTSQIFDIIIISLIILNMISMMA. Topologically, residues 1386–1396 are extracellular; that stretch reads ESYNQPKAMKS. Residues 1397–1420 traverse the membrane as a helical segment; that stretch reads ILDHLNWVFVVIFTLECLIKIFAL. Over 1421–1426 the chain is Cytoplasmic; sequence RQYYFT. Residues 1427–1450 traverse the membrane as a helical segment; the sequence is NGWNLFDCVVVLLSIVSTMISTLE. The Extracellular portion of the chain corresponds to 1451–1461; that stretch reads NQEHIPFPPTL. Residues 1462–1484 traverse the membrane as a helical; Voltage-sensor segment; that stretch reads FRIVRLARIGRILRLVRAARGIR. Residues 1485–1499 lie on the Cytoplasmic side of the membrane; that stretch reads TLLFALMMSLPSLFN. A helical transmembrane segment spans residues 1500 to 1522; sequence IGLLLFLIMFIYAILGMNWFSKV. At 1523–1536 the chain is on the extracellular side; it reads NPESGIDDIFNFKT. The segment at residues 1537-1559 is an intramembrane region (pore-forming); that stretch reads FASSMLCLFQISTSAGWDSLLSP. At 1560–1579 the chain is on the extracellular side; sequence MLRSKESCNSSSENCHLPGI. N-linked (GlcNAc...) asparagine glycosylation occurs at asparagine 1568. The helical transmembrane segment at 1580 to 1604 threads the bilayer; sequence ATSYFVSYIIISFLIVVNMYIAVIL. Over 1605–1791 the chain is Cytoplasmic; sequence ENFNTATEES…GVAKGKVHCD (187 aa).

It belongs to the sodium channel (TC 1.A.1.10) family. Nav1.9/SCN11A subfamily. The voltage-resistant sodium channel consists of an ion conducting pore forming alpha-subunit regulated by one or more auxiliary subunits SCN1B, SCN2B and SCN3B. As to expression, expressed in the dorsal root ganglia and trigeminal ganglia, olfactory bulb, hippocampus, cerebellar cortex, spinal cord, spleen, small intestine and placenta.

Its subcellular location is the cell membrane. The enzyme catalyses Na(+)(in) = Na(+)(out). With respect to regulation, activity is not sensitive to inhibition by tetrodotoxin. Functionally, sodium channel mediating the voltage-dependent sodium ion permeability of excitable membranes. Assuming opened or closed conformations in response to the voltage difference across the membrane, the protein forms a sodium-selective channel through which sodium ions may pass in accordance with their electrochemical gradient. Involved in membrane depolarization during action potential in nociceptors which function as key relay stations for the electrical transmission of pain signals from the periphery to the central nervous system. Also involved in rapid BDNF-evoked neuronal depolarization. This is Sodium channel protein type 11 subunit alpha from Homo sapiens (Human).